The following is a 2256-amino-acid chain: Death-inducer obliterator 1 (2256 aa).

An N-acetylmethionine modification is found at methionine 1. Positions 1–25 (MDDKGHLSNEEAPKAIKPTSKEFRK) are enriched in basic and acidic residues. Residues 1–256 (MDDKGHLSNE…NPREAGKPKP (256 aa)) form a disordered region. Polar residues-rich tracts occupy residues 48 to 59 (SEQQPQQHNLSL) and 96 to 119 (EPTS…SSEI). Residues serine 58 and serine 112 each carry the phosphoserine modification. The span at 128-142 (LGKEHPASSEKAKGG) shows a compositional bias: basic and acidic residues. Positions 143–153 (EEEEDTSDSDS) are enriched in acidic residues. Position 148 is a phosphothreonine (threonine 148). Phosphoserine is present on residues serine 149 and serine 151. Short sequence motifs (nuclear localization signal) lie at residues 162 to 170 (QNRLRRKRE) and 182 to 190 (QNRLRKKRR). Residues 169-178 (REQEPVERSL) are compositionally biased toward basic and acidic residues. 2 stretches are compositionally biased toward basic and acidic residues: residues 206–216 (EQDRPLCKQEP) and 246–256 (ENPREAGKPKP). The segment at 265–319 (ALYCICRQPHNNRFMICCDRCEEWFHGDCVGISEARGRLLERNGEDYICPNCTIL) adopts a PHD-type zinc-finger fold. 7 disordered regions span residues 481–535 (LASR…DDRR), 598–624 (RPWP…ASKK), 641–668 (ANVP…SQIR), 778–822 (SRTK…PEKS), 856–970 (QVPS…TALS), 1011–1039 (AKPS…PPEG), and 1197–1218 (PSSA…QEEL). The segment covering 495–506 (ESSTPSWASDHN) has biased composition (polar residues). A Phosphoserine modification is found at serine 522. A TFIIS central domain is found at 667–787 (IRQNIRRSLK…SRTKLLNESK (121 aa)). Residues 778–788 (SRTKLLNESKK) are compositionally biased toward basic and acidic residues. Positions 797–812 (PDMEDSPPVSDSEEQQ) are enriched in acidic residues. A phosphoserine mark is found at serine 802 and serine 806. Basic and acidic residues-rich tracts occupy residues 875-886 (SKKEDFKPRHDS) and 921-935 (QERK…DSHP). Lysine 876 participates in a covalent cross-link: Glycyl lysine isopeptide (Lys-Gly) (interchain with G-Cter in SUMO2). Serine 886 bears the Phosphoserine mark. Residues 937–962 (PSSLGGLSPSSASGGSGVVTTVTMSG) are compositionally biased toward low complexity. Serine 1016, serine 1027, and serine 1035 each carry phosphoserine. Over residues 1202–1215 (ELDKTDEKRTRLQQ) the composition is skewed to basic and acidic residues. Phosphotyrosine is present on tyrosine 1239. A disordered region spans residues 1245 to 1288 (DTAATSTTPPGSPPPPPPLPEPPVLKILSSLKPGSTSTVTAPTT). Threonine 1252 is subject to Phosphothreonine. Over residues 1254–1267 (PGSPPPPPPLPEPP) the composition is skewed to pro residues. At serine 1256 the chain carries Phosphoserine. A compositionally biased stretch (low complexity) spans 1279–1288 (STSTVTAPTT). A Phosphoserine modification is found at serine 1307. 4 disordered regions span residues 1320–1347 (KKSF…KGED), 1362–1421 (FGQF…VAYD), 1509–1609 (SDAL…EAKE), and 1630–2256 (QKCE…AAQA). The segment covering 1371-1387 (LEEEEEDDRPYDPEEEY) has biased composition (acidic residues). Position 1514 is a phosphoserine (serine 1514). A compositionally biased stretch (polar residues) spans 1526 to 1546 (LFSQEQQAPDPSQGAPNTNHN). Over residues 1547-1557 (LDSRQSRDPRQ) the composition is skewed to basic and acidic residues. Positions 1649–1666 (PTAGDGAARPAPPRRVLL) are enriched in low complexity. Positions 1667-1679 (PTPPSTTFPPSFP) are enriched in pro residues. The segment covering 1699–1712 (TFMSQETSLGSSQY) has biased composition (polar residues). Serine 1726 carries the phosphoserine modification. The segment covering 1783-1792 (FPGPRGPVPP) has biased composition (pro residues). Arginine 1848 bears the Omega-N-methylarginine mark. A compositionally biased stretch (basic and acidic residues) spans 1855–1869 (FEDRKDPHGEKREFQ). Asymmetric dimethylarginine is present on residues arginine 1904, arginine 1905, arginine 1988, arginine 1993, arginine 2004, arginine 2019, and arginine 2035. Composition is skewed to basic and acidic residues over residues 2081 to 2113 (EFRE…KPLD) and 2123 to 2246 (RQGR…EART).

In terms of assembly, interacts specifically (via PHD-type zinc finger) with histone H3 that is trimethylated at 'Lys-4' (H3K4me3), histone phosphorylation at 'Thr-3' or 'Thr-6' disrupts this binding and promotes translocation of DIDO1 from chromatin to the mitotic spindle during mitosis. As to expression, ubiquitous. Expressed at intermediate levels.

Its subcellular location is the cytoplasm. It localises to the nucleus. The protein resides in the cytoskeleton. It is found in the spindle. Functionally, required for early embryonic stem cell development. Putative transcription factor, weakly pro-apoptotic when overexpressed. This Mus musculus (Mouse) protein is Death-inducer obliterator 1 (Dido1).